Reading from the N-terminus, the 863-residue chain is Scm-like with four MBT domains protein 1 (863 aa).

4 MBT repeats span residues 20 to 120 (FSWE…LEAP), 128 to 232 (SDWN…LQPP), 242 to 346 (ADWQ…INPP), and 354 to 451 (FDWA…LSTP). The segment at 638 to 773 (KKKNKRIGRP…SDDENKPPSP (136 aa)) is disordered. A compositionally biased stretch (basic residues) spans 660–679 (KSSKRRKRRKNIFVHKKKRS). Residues 680–691 (SASVDNTPVGSP) show a composition bias toward polar residues. Composition is skewed to acidic residues over residues 696–710 (GEDE…EDSL) and 718–727 (QQEELQEESE). Over residues 734–744 (SSSSPTQSETP) the composition is skewed to low complexity. S764 and S772 each carry phosphoserine. An SAM domain is found at 793-861 (WSVADVVRFI…RIKFAFYEQF (69 aa)).

As to quaternary structure, interacts with MYOD1. Component of the SLC (SFMBT1-LSD1-CoREST) corepressor complex, which also contains KDM1A/LSD1 and RCOR1/CoREST. Interacts with KDM1A/LSD1 and RCOR1/CoREST. Interacts with MYOD1. Interacts with L3MBTL3. As to expression, highly expressed in the testis, low expression is detected in brain, kidney, heart and lung. Highly expressed in germ cells, where it associates with the synaptic regions of meiotic chromosomes in pachytene stage spermatocytes.

Its subcellular location is the nucleus. Its function is as follows. Histone-binding protein, which is part of various corepressor complexes. Mediates the recruitment of corepressor complexes to target genes, followed by chromatin compaction and repression of transcription. Plays a role during myogenesis: required for the maintenance of undifferentiated states of myogenic progenitor cells via interaction with MYOD1. Interaction with MYOD1 leads to the recruitment of associated corepressors and silencing of MYOD1 target genes. Part of the SLC complex in germ cells, where it may play a role during spermatogenesis. This chain is Scm-like with four MBT domains protein 1 (Sfmbt1), found in Mus musculus (Mouse).